The chain runs to 216 residues: MEPRINDLQVESRVHELLDFPVHTNQISSAIYECPNDHIENPKKKPYNCPHSGAKCDVTGDIQRLLLHLRNDHNVEMSDGRSFSHRYVHHDPKHLHHATWMLTLLDCCGRKFCLYFEAFHLRKTPMYMAFMQFMGDEEEAMSFSYSLQVGGNGRKLTWQGVPRSIRDSHKTVRDSQDGLIITRKLALFFSTDNNTTDKELKLKVSGRVWREQPVSI.

An SIAH-type zinc finger spans residues 5–74 (INDLQVESRV…LLLHLRNDHN (70 aa)).

This sequence belongs to the SINA (Seven in absentia) family. As to quaternary structure, homodimer. Interacts with SINAT1, SINAT2, SINAT3, SINAT4 and SINAT5. Interacts with ATG6 and TRAF1A. Expressed in roots, rosette leaves, cauline leaves, guard cells and flowers.

The protein localises to the cytoplasm. It localises to the nucleus. Probable inactive E3 ubiquitin-protein ligase that plays a role in regulation of autophagy. Upon starvation, involved in maintaining ATG6 homeostasis by competitively associating with ATG6, a component of the autophagosome complex. Acts as a positive regulator of drought stress response. Functions as a positive regulator of abscisic acid-mediated stomatal closure. The protein is Probable inactive E3 ubiquitin-protein ligase SINAT6 of Arabidopsis thaliana (Mouse-ear cress).